We begin with the raw amino-acid sequence, 288 residues long: Alpha/beta hydrolase domain-containing protein 17B (288 aa).

Residues serine 170, aspartate 235, and histidine 264 each act as charge relay system in the active site.

Belongs to the AB hydrolase superfamily. ABHD17 family. Palmitoylated on cysteine residues located in a cysteine cluster at the N-terminus which promotes membrane localization.

It localises to the cell membrane. Its subcellular location is the recycling endosome membrane. The protein localises to the cell projection. It is found in the dendritic spine. The protein resides in the postsynaptic density membrane. The catalysed reaction is S-hexadecanoyl-L-cysteinyl-[protein] + H2O = L-cysteinyl-[protein] + hexadecanoate + H(+). Functionally, hydrolyzes fatty acids from S-acylated cysteine residues in proteins. Has depalmitoylating activity towards NRAS. The polypeptide is Alpha/beta hydrolase domain-containing protein 17B (Gallus gallus (Chicken)).